We begin with the raw amino-acid sequence, 262 residues long: 5'-nucleotidase SurE (262 aa).

Residues D8, D9, S39, and N95 each contribute to the a divalent metal cation site.

The protein belongs to the SurE nucleotidase family. A divalent metal cation is required as a cofactor.

It localises to the cytoplasm. It carries out the reaction a ribonucleoside 5'-phosphate + H2O = a ribonucleoside + phosphate. Its function is as follows. Nucleotidase that shows phosphatase activity on nucleoside 5'-monophosphates. The polypeptide is 5'-nucleotidase SurE (Methanothermobacter thermautotrophicus (strain ATCC 29096 / DSM 1053 / JCM 10044 / NBRC 100330 / Delta H) (Methanobacterium thermoautotrophicum)).